The primary structure comprises 240 residues: MSAPLSLFVTGTDTEIGKTFVSAALLHGFARAGLRAAAMKPVAAGAYERDGAWRNEDADQLDAAANVALPAAIRTPFLLKAPAAPHIVAAREGVALDIGTIVDAHRRACEMADVIVVEGVGGFRVPLADTRDTADLAVALGLPVVLVVGVRLGCISHALLTAEAIAARGLPLAGWVANRIDPAMPFADDNIDTLRAWLEREHRAPLLGALAHMSPPSPDAASHALDVNLLLNALRAAAPR.

15-20 (EIGKTF) is an ATP binding site. Mg(2+) is bound at residue Thr19. Lys40 is an active-site residue. ATP contacts are provided by residues Asp57, 118 to 121 (EGVG), and 178 to 179 (NR). Mg(2+)-binding residues include Asp57 and Glu118.

Belongs to the dethiobiotin synthetase family. As to quaternary structure, homodimer. Mg(2+) is required as a cofactor.

The protein localises to the cytoplasm. It carries out the reaction (7R,8S)-7,8-diammoniononanoate + CO2 + ATP = (4R,5S)-dethiobiotin + ADP + phosphate + 3 H(+). Its pathway is cofactor biosynthesis; biotin biosynthesis; biotin from 7,8-diaminononanoate: step 1/2. Catalyzes a mechanistically unusual reaction, the ATP-dependent insertion of CO2 between the N7 and N8 nitrogen atoms of 7,8-diaminopelargonic acid (DAPA, also called 7,8-diammoniononanoate) to form a ureido ring. The chain is ATP-dependent dethiobiotin synthetase BioD from Burkholderia pseudomallei (strain K96243).